Reading from the N-terminus, the 179-residue chain is GTP-dependent dephospho-CoA kinase (179 aa).

Residues D50, V51, V52, D69, K71, and E126 each coordinate GTP.

Belongs to the GTP-dependent DPCK family.

The catalysed reaction is 3'-dephospho-CoA + GTP = GDP + CoA + H(+). It functions in the pathway cofactor biosynthesis; coenzyme A biosynthesis. Its function is as follows. Catalyzes the GTP-dependent phosphorylation of the 3'-hydroxyl group of dephosphocoenzyme A to form coenzyme A (CoA). The protein is GTP-dependent dephospho-CoA kinase of Pyrococcus horikoshii (strain ATCC 700860 / DSM 12428 / JCM 9974 / NBRC 100139 / OT-3).